Consider the following 160-residue polypeptide: Probable chemoreceptor glutamine deamidase CheD (160 aa).

The protein belongs to the CheD family.

It catalyses the reaction L-glutaminyl-[protein] + H2O = L-glutamyl-[protein] + NH4(+). In terms of biological role, probably deamidates glutamine residues to glutamate on methyl-accepting chemotaxis receptors (MCPs), playing an important role in chemotaxis. In Desulfitobacterium hafniense (strain DSM 10664 / DCB-2), this protein is Probable chemoreceptor glutamine deamidase CheD.